Consider the following 146-residue polypeptide: Large ribosomal subunit protein uL15 (146 aa).

The span at 1 to 18 (MKLHELKPAEGSRKERNR) shows a compositional bias: basic and acidic residues. Residues 1-54 (MKLHELKPAEGSRKERNRVGRGVATGNGKTSGRGHKGQKARSGGGVRPGFEGGQ) are disordered. Over residues 42-52 (SGGGVRPGFEG) the composition is skewed to gly residues.

Belongs to the universal ribosomal protein uL15 family. As to quaternary structure, part of the 50S ribosomal subunit.

Functionally, binds to the 23S rRNA. This chain is Large ribosomal subunit protein uL15, found in Staphylococcus aureus (strain Mu3 / ATCC 700698).